The primary structure comprises 318 residues: Na(+)-translocating NADH-quinone reductase subunit C (318 aa).

A helical transmembrane segment spans residues 13–33; that stretch reads WYIILFIFVLSLVAGTLLSSV. T281 carries the post-translational modification FMN phosphoryl threonine.

It belongs to the NqrC family. As to quaternary structure, composed of six subunits; NqrA, NqrB, NqrC, NqrD, NqrE and NqrF. FMN is required as a cofactor.

It localises to the cell inner membrane. The enzyme catalyses a ubiquinone + n Na(+)(in) + NADH + H(+) = a ubiquinol + n Na(+)(out) + NAD(+). Functionally, NQR complex catalyzes the reduction of ubiquinone-1 to ubiquinol by two successive reactions, coupled with the transport of Na(+) ions from the cytoplasm to the periplasm. NqrA to NqrE are probably involved in the second step, the conversion of ubisemiquinone to ubiquinol. The sequence is that of Na(+)-translocating NADH-quinone reductase subunit C from Chlamydia muridarum (strain MoPn / Nigg).